A 105-amino-acid polypeptide reads, in one-letter code: Large ribosomal subunit protein bL21c (105 aa).

The protein belongs to the bacterial ribosomal protein bL21 family. As to quaternary structure, part of the 50S ribosomal subunit.

It is found in the plastid. The protein localises to the chloroplast. This protein binds to 23S rRNA. The sequence is that of Large ribosomal subunit protein bL21c from Phaeodactylum tricornutum (strain CCAP 1055/1).